A 396-amino-acid chain; its full sequence is Argininosuccinate synthase (396 aa).

Residue 6–14 (AYSGGLDTS) participates in ATP binding. Tyr-83 is a binding site for L-citrulline. Residue Gly-113 participates in ATP binding. The L-aspartate site is built by Thr-115, Asn-119, and Asp-120. Asn-119 contacts L-citrulline. Residues Arg-123, Ser-171, Ser-180, Glu-256, and Tyr-268 each coordinate L-citrulline.

It belongs to the argininosuccinate synthase family. Type 1 subfamily. Homotetramer.

It localises to the cytoplasm. The enzyme catalyses L-citrulline + L-aspartate + ATP = 2-(N(omega)-L-arginino)succinate + AMP + diphosphate + H(+). The protein operates within amino-acid biosynthesis; L-arginine biosynthesis; L-arginine from L-ornithine and carbamoyl phosphate: step 2/3. The polypeptide is Argininosuccinate synthase (Hyperthermus butylicus (strain DSM 5456 / JCM 9403 / PLM1-5)).